A 548-amino-acid polypeptide reads, in one-letter code: Isocitrate dehydrogenase [NAD(+)] 1, mitochondrial (548 aa).

The N-terminal 53 residues, 1–53 (MSSLSTLRILHSTAGRRWASYYGIYPKSAACSSSSVAIARFFSTAADRPPKHA), are a transit peptide targeting the mitochondrion. NAD(+) contacts are provided by residues 132-134 (TIT) and N153. Residues 151–157 (SPNGAMR), R187, Y194, K266, D311, and D335 each bind D-threo-isocitrate. The Mg(2+) site is built by D311, D335, and D339. Residues 372-377 (HGTVSD) and N391 each bind NAD(+). The EF-hand domain maps to 499 to 534 (IDEEAINGLFQKYDKNGDGFIDFEEFTRMLVKMNLA). D512, N514, D516, F518, and E523 together coordinate Ca(2+).

It belongs to the isocitrate and isopropylmalate dehydrogenases family. As to quaternary structure, homodimer. Mg(2+) serves as cofactor. It depends on Mn(2+) as a cofactor.

Its subcellular location is the mitochondrion. It catalyses the reaction D-threo-isocitrate + NAD(+) = 2-oxoglutarate + CO2 + NADH. With respect to regulation, the homodimer exhibits allosteric regulation by isocitrate. Activated by Mn(2+) and Mg(2+). No activation by Na(+), K(+) or Li(+). Inhibited by Co(2+), Cu(2+) and Ni(2+), but not with Ca(2+) in the presence of Mn(2+) or Mg(2+). Competitively inhibited by NADH, but no effect on activity by 1.0 mM citrate. Strongly inhibited by excess ATP, ADP, AMP and alpha-ketoglutarate. Its function is as follows. Performs an essential role in the oxidative function of the tricarboxylic acid cycle and respiration. Catalyzes the decarboxylation of isocitrate to produce 2-oxoglutarate and generate NADH to provide electrons for energy production. No activity with NADP(+). The polypeptide is Isocitrate dehydrogenase [NAD(+)] 1, mitochondrial (Phaeodactylum tricornutum (strain CCAP 1055/1)).